A 457-amino-acid chain; its full sequence is NADH-quinone oxidoreductase subunit D (457 aa).

The tract at residues 1 to 23 (MSTHTETPVDGSAETITGAQPYE) is disordered.

The protein belongs to the complex I 49 kDa subunit family. NDH-1 is composed of 14 different subunits. Subunits NuoB, C, D, E, F, and G constitute the peripheral sector of the complex.

It is found in the cell membrane. The enzyme catalyses a quinone + NADH + 5 H(+)(in) = a quinol + NAD(+) + 4 H(+)(out). In terms of biological role, NDH-1 shuttles electrons from NADH, via FMN and iron-sulfur (Fe-S) centers, to quinones in the respiratory chain. The immediate electron acceptor for the enzyme in this species is believed to be a menaquinone. Couples the redox reaction to proton translocation (for every two electrons transferred, four hydrogen ions are translocated across the cytoplasmic membrane), and thus conserves the redox energy in a proton gradient. In Parafrankia sp. (strain EAN1pec), this protein is NADH-quinone oxidoreductase subunit D.